The sequence spans 370 residues: 4-hydroxy-3-methylbut-2-en-1-yl diphosphate synthase (flavodoxin) (370 aa).

4 residues coordinate [4Fe-4S] cluster: Cys270, Cys273, Cys305, and Glu312.

The protein belongs to the IspG family. [4Fe-4S] cluster is required as a cofactor.

It carries out the reaction (2E)-4-hydroxy-3-methylbut-2-enyl diphosphate + oxidized [flavodoxin] + H2O + 2 H(+) = 2-C-methyl-D-erythritol 2,4-cyclic diphosphate + reduced [flavodoxin]. The protein operates within isoprenoid biosynthesis; isopentenyl diphosphate biosynthesis via DXP pathway; isopentenyl diphosphate from 1-deoxy-D-xylulose 5-phosphate: step 5/6. Converts 2C-methyl-D-erythritol 2,4-cyclodiphosphate (ME-2,4cPP) into 1-hydroxy-2-methyl-2-(E)-butenyl 4-diphosphate. This chain is 4-hydroxy-3-methylbut-2-en-1-yl diphosphate synthase (flavodoxin), found in Saccharophagus degradans (strain 2-40 / ATCC 43961 / DSM 17024).